We begin with the raw amino-acid sequence, 649 residues long: Solute carrier family 22 member 17 (649 aa).

The segment at 1–70 is disordered; it reads MAPRVATGTP…GGDGLGSSLS (70 aa). The segment covering 24–34 has biased composition (polar residues); sequence VEITPTSNGQV. The segment covering 47-57 has biased composition (basic and acidic residues); that stretch reads QGEREREREGE. Residues N134 and N143 are each glycosylated (N-linked (GlcNAc...) asparagine). 11 helical membrane-spanning segments follow: residues 211 to 231, 240 to 260, 265 to 285, 300 to 320, 330 to 350, 414 to 433, 448 to 468, 477 to 497, 526 to 546, 557 to 577, and 584 to 604; these read VILE…FLGY, GIVL…AAAG, VMAL…GVYL, ALAG…LALV, MITA…FLES, NIWK…HAIR, FYLC…FLGV, GILL…LGLW, FSVL…LLAA, GLGL…AQRL, and FLQH…IMLL.

This sequence belongs to the major facilitator (TC 2.A.1) superfamily. Organic cation transporter (TC 2.A.1.19) family. In terms of tissue distribution, expressed in brain.

Its subcellular location is the cell membrane. The protein localises to the vacuole membrane. Functionally, cell surface receptor for LCN2 (24p3) that plays a key role in iron homeostasis and transport. Able to bind iron-bound LCN2 (holo-24p3), followed by internalization of holo-24p3 and release of iron, thereby increasing intracellular iron concentration and leading to inhibition of apoptosis. Also binds iron-free LCN2 (apo-24p3), followed by internalization of apo-24p3 and its association with an intracellular siderophore, leading to iron chelation and iron transfer to the extracellular medium, thereby reducing intracellular iron concentration and resulting in apoptosis. The polypeptide is Solute carrier family 22 member 17 (SLC22A17) (Homo sapiens (Human)).